Here is a 211-residue protein sequence, read N- to C-terminus: Ribonuclease HII (211 aa).

An RNase H type-2 domain is found at 24–211 (QLIAGVDEVG…KPVKKALGLD (188 aa)). A divalent metal cation contacts are provided by aspartate 30, glutamate 31, and aspartate 122.

The protein belongs to the RNase HII family. The cofactor is Mn(2+). It depends on Mg(2+) as a cofactor.

Its subcellular location is the cytoplasm. The enzyme catalyses Endonucleolytic cleavage to 5'-phosphomonoester.. In terms of biological role, endonuclease that specifically degrades the RNA of RNA-DNA hybrids. This chain is Ribonuclease HII, found in Vibrio parahaemolyticus serotype O3:K6 (strain RIMD 2210633).